A 1401-amino-acid polypeptide reads, in one-letter code: MKSCGVSLATAAAAAAAFGDEEKKMAAGKASGESEEASPSLTAEEREALGGLDSRLFGFVRFHEDGARTKALLGKAVRCYESLILKAEGKVESDFFCQLGHFNLLLEDYPKALSAYQRYYSLQSDYWKNAAFLYGLGLVYFHYNAFQWAIKAFQEVLYVDPSFCRAKEIHLRLGLMFKVNTDYESSLKHFQLALVDCNPCTLSNAEIQFHIAHLYETQRKYHSAKEAYEQLLQTENLSAQVKATVLQQLGWMHHTVDLLGDKATKESYAIQYLQKSLEADPNSGQSWYFLGRCYSSIGKVQDAFISYRQSIDKSEASADTWCSIGVLYQQQNQPMDALQAYICAVQLDHGHAAAWMDLGTLYESCNQPQDAIKCYLNATRSKSCSNTSALAARIKYLQAQLCNLPQGSLQNKTKLLPSIEEAWSLPIPAELTSRQGAMNTAQQNTSDNWSGGHAVSHPPVQQQAHSWCLTPQKLQHLEQLRANRNNLNPAQKLMLEQLESQFVLMQQHQMRPTGVAQVRSTGIPNGPTADSSLPTNSVSGQQPQLALTRVPSVSQPGVRPACPGQPLANGPFSAGHVPCSTSRTLGSTDTILIGNNHITGSGSNGNVPYLQRNALTLPHNRTNLTSSAEEPWKNQLSNSTQGLHKGQSSHSAGPNGERPLSSTGPSQHLQAAGSGIQNQNGHPTLPSNSVTQGAALNHLSSHTATSGGQQGITLTKESKPSGNILTVPETSRHTGETPNSTASVEGLPNHVHQMTADAVCSPSHGDSKSPGLLSSDNPQLSALLMGKANNNVGTGTCDKVNNIHPAVHTKTDNSVASSPSSAISTATPSPKSTEQTTTNSVTSLNSPHSGLHTINGEGMEESQSPMKTDLLLVNHKPSPQIIPSMSVSIYPSSAEVLKACRNLGKNGLSNSSILLDKCPPPRPPSSPYPPLPKDKLNPPTPSIYLENKRDAFFPPLHQFCTNPNNPVTVIRGLAGALKLDLGLFSTKTLVEANNEHMVEVRTQLLQPADENWDPTGTKKIWHCESNRSHTTIAKYAQYQASSFQESLREENEKRSHHKDHSDSESTSSDNSGRRRKGPFKTIKFGTNIDLSDDKKWKLQLHELTKLPAFVRVVSAGNLLSHVGHTILGMNTVQLYMKVPGSRTPGHQENNNFCSVNINIGPGDCEWFVVPEGYWGVLNDFCEKNNLNFLMGSWWPNLEDLYEANVPVYRFIQRPGDLVWINAGTVHWVQAIGWCNNIAWNVGPLTACQYKLAVERYEWNKLQSVKSIVPMVHLSWNMARNIKVSDPKLFEMIKYCLLRTLKQCQTLREALIAAGKEIIWHGRTKEEPAHYCSICEVEVFDLLFVTNESNSRKTYIVHCQDCARKTSGNLENFVVLEQYKMEDLMQVYDQFTLAPPLPSASS.

The interval 1–1095 (MKSCGVSLAT…TNIDLSDDKK (1095 aa)) is interaction with SUPT6H. TPR repeat units lie at residues 93–126 (SDFFCQLGHFNLLLEDYPKALSAYQRYYSLQSDY), 130–163 (AAFLYGLGLVYFHYNAFQWAIKAFQEVLYVDPSF), 170–199 (HLRLGLMFKVNTDYESSLKHFQLALVDCNP), 205–238 (AEIQFHIAHLYETQRKYHSAKEAYEQLLQTENLS), 250–283 (GWMHHTVDLLGDKATKESYAIQYLQKSLEADPNS), 284–317 (GQSWYFLGRCYSSIGKVQDAFISYRQSIDKSEAS), 318–351 (ADTWCSIGVLYQQQNQPMDALQAYICAVQLDHGH), and 352–385 (AAAWMDLGTLYESCNQPQDAIKCYLNATRSKSCS). Residues 437–449 (AMNTAQQNTSDNW) are compositionally biased toward polar residues. Residues 437–457 (AMNTAQQNTSDNWSGGHAVSH) are disordered. Omega-N-methylarginine is present on R519. The disordered stretch occupies residues 521–541 (TGIPNGPTADSSLPTNSVSGQ). Position 549 is an omega-N-methylarginine (R549). Composition is skewed to polar residues over residues 624–652 (LTSSAEEPWKNQLSNSTQGLHKGQSSHSA) and 660–724 (LSST…SGNI). Disordered stretches follow at residues 624-746 (LTSS…SVEG), 758-778 (AVCSPSHGDSKSPGLLSSDNP), 810-864 (KTDN…ESQS), 914-940 (LLDKCPPPRPPSSPYPPLPKDKLNPPT), and 1043-1079 (FQESLREENEKRSHHKDHSDSESTSSDNSGRRRKGPF). S769 carries the post-translational modification Phosphoserine. Residues 814-833 (SVASSPSSAISTATPSPKST) are compositionally biased toward low complexity. Position 827 is a phosphothreonine (T827). A Phosphoserine modification is found at S829. The span at 834–848 (EQTTTNSVTSLNSPH) shows a compositional bias: polar residues. Residues 918-931 (CPPPRPPSSPYPPL) show a composition bias toward pro residues. Basic and acidic residues predominate over residues 1046–1063 (SLREENEKRSHHKDHSDS). Residues 1095 to 1258 (KWKLQLHELT…YKLAVERYEW (164 aa)) form the JmjC domain. 3 residues coordinate Fe cation: H1146, E1148, and H1226. C1331, C1334, C1358, and C1361 together coordinate Zn(2+).

Belongs to the UTX family. Interacts with TLE1. Component of the MLL2/3 complex (also named ASCOM complex), at least composed of KMT2D/MLL2 or KMT2C/MLL3, ASH2L, RBBP5, WDR5, NCOA6, DPY30, KDM6A (or KDM6B), PAXIP1/PTIP, PAGR1 and alpha- and beta-tubulin. Interacts with SUPT6H. Interacts with SMARCA4. Interacts with PROSER1. It depends on L-ascorbate as a cofactor. Fe(2+) serves as cofactor.

It localises to the nucleus. It carries out the reaction N(6),N(6),N(6)-trimethyl-L-lysyl(27)-[histone H3] + 2 2-oxoglutarate + 2 O2 = N(6)-methyl-L-lysyl(27)-[histone H3] + 2 formaldehyde + 2 succinate + 2 CO2. Its function is as follows. Histone demethylase that specifically demethylates 'Lys-27' of histone H3, thereby playing a central role in histone code. Demethylates trimethylated and dimethylated but not monomethylated H3 'Lys-27'. Plays a central role in regulation of posterior development, by regulating HOX gene expression. Demethylation of 'Lys-27' of histone H3 is concomitant with methylation of 'Lys-4' of histone H3, and regulates the recruitment of the PRC1 complex and monoubiquitination of histone H2A. Plays a demethylase-independent role in chromatin remodeling to regulate T-box family member-dependent gene expression. This Homo sapiens (Human) protein is Lysine-specific demethylase 6A (KDM6A).